A 413-amino-acid chain; its full sequence is Arogenate dehydratase/prephenate dehydratase 6, chloroplastic (413 aa).

Residues 1 to 44 (MKALSSSSPILGASQPATATALIARSGRSEWQSSCAILTSKVIS) constitute a chloroplast transit peptide. Positions 117-294 (RVAYQGVPGA…NVTRFVMLAR (178 aa)) constitute a Prephenate dehydratase domain. Positions 308–399 (SIVFAHEKGT…SFLRVLGSYP (92 aa)) constitute an ACT domain.

In terms of tissue distribution, expressed in roots, leaves, stems, flowers and siliques.

Its subcellular location is the plastid. The protein localises to the chloroplast stroma. It catalyses the reaction L-arogenate + H(+) = L-phenylalanine + CO2 + H2O. It carries out the reaction prephenate + H(+) = 3-phenylpyruvate + CO2 + H2O. The protein operates within amino-acid biosynthesis; L-phenylalanine biosynthesis; L-phenylalanine from L-arogenate: step 1/1. Its pathway is amino-acid biosynthesis; L-phenylalanine biosynthesis; phenylpyruvate from prephenate: step 1/1. Its function is as follows. Converts the prephenate produced from the shikimate-chorismate pathway into phenylalanine. Dehydratase that uses arogenate and prephenate as substrates. Utilzes more efficiently arogenate than prephenate. This Arabidopsis thaliana (Mouse-ear cress) protein is Arogenate dehydratase/prephenate dehydratase 6, chloroplastic.